Reading from the N-terminus, the 867-residue chain is Alanine--tRNA ligase (867 aa).

Residues His-556, His-560, Cys-658, and His-662 each coordinate Zn(2+).

Belongs to the class-II aminoacyl-tRNA synthetase family. Zn(2+) is required as a cofactor.

It localises to the cytoplasm. It carries out the reaction tRNA(Ala) + L-alanine + ATP = L-alanyl-tRNA(Ala) + AMP + diphosphate. Functionally, catalyzes the attachment of alanine to tRNA(Ala) in a two-step reaction: alanine is first activated by ATP to form Ala-AMP and then transferred to the acceptor end of tRNA(Ala). Also edits incorrectly charged Ser-tRNA(Ala) and Gly-tRNA(Ala) via its editing domain. The sequence is that of Alanine--tRNA ligase from Fusobacterium nucleatum subsp. nucleatum (strain ATCC 25586 / DSM 15643 / BCRC 10681 / CIP 101130 / JCM 8532 / KCTC 2640 / LMG 13131 / VPI 4355).